We begin with the raw amino-acid sequence, 129 residues long: uncharacterized protein (129 aa).

The segment covering 86-96 (NDGFSSDDEPE) has biased composition (acidic residues). Positions 86–116 (NDGFSSDDEPEEHVILTEDNQGEPSETPQAT) are disordered. Over residues 103–116 (EDNQGEPSETPQAT) the composition is skewed to polar residues.

Belongs to the asfivirus D129L family.

This is an uncharacterized protein from African swine fever virus (strain Badajoz 1971 Vero-adapted) (Ba71V).